A 167-amino-acid chain; its full sequence is Glutathione peroxidase 1 (167 aa).

The active site involves C41.

The protein belongs to the glutathione peroxidase family.

The enzyme catalyses 2 glutathione + H2O2 = glutathione disulfide + 2 H2O. Functionally, may constitute a glutathione peroxidase-like protective system against oxidative stresses. The polypeptide is Glutathione peroxidase 1 (GPXHA-1) (Helianthus annuus (Common sunflower)).